Consider the following 249-residue polypeptide: AA9 family lytic polysaccharide monooxygenase A (249 aa).

A signal peptide spans 1–21; it reads MALSKIAALSTILASASLVAG. Position 22 (His-22) interacts with Cu(2+). At His-22 the chain carries Methylhistidine. N-linked (GlcNAc...) asparagine glycans are attached at residues Asn-34 and Asn-80. 2 disulfides stabilise this stretch: Cys-77–Cys-199 and Cys-118–Cys-122. His-107 provides a ligand contact to Cu(2+). 2 residues coordinate O2: His-185 and Gln-194. Tyr-196 contacts Cu(2+).

Belongs to the polysaccharide monooxygenase AA9 family. The cofactor is Cu(2+). In terms of processing, the catalytically essential N-terminal histidine His-22 is post-translationally modified by methylation to prevent protonation of the histidine side chain, and protect the critical active site of the enzyme from oxidative damage.

Its subcellular location is the secreted. It carries out the reaction [(1-&gt;4)-beta-D-glucosyl]n+m + reduced acceptor + O2 = 4-dehydro-beta-D-glucosyl-[(1-&gt;4)-beta-D-glucosyl]n-1 + [(1-&gt;4)-beta-D-glucosyl]m + acceptor + H2O.. Its function is as follows. Lytic polysaccharide monooxygenase (LPMO) that exhibits a mixed C1/C4 oxidative cleavage activity on cellulose and xyloglucan. Catalysis by LPMOs requires the reduction of the active-site copper from Cu(II) to Cu(I) by a reducing agent and H(2)O(2) or O(2) as a cosubstrate. Shows a higher boosting effect with cellulases on the enzymatic saccharification of complex lignocellulosic substrates associated with xyloglucan than on the lignocellulosic substrates without xyloglucan. The oxidative cleavage of xyloglucan by LPMO9A may facilitate to open up the sterical hindrance of cellulose by xyloglucan and thereby increase accessibility for cellulase to lignocellulosic substrates. The sequence is that of AA9 family lytic polysaccharide monooxygenase A from Penicillium parvum (Eupenicillium parvum).